The primary structure comprises 343 residues: S-adenosylmethionine:tRNA ribosyltransferase-isomerase (343 aa).

Belongs to the QueA family. In terms of assembly, monomer.

Its subcellular location is the cytoplasm. It catalyses the reaction 7-aminomethyl-7-carbaguanosine(34) in tRNA + S-adenosyl-L-methionine = epoxyqueuosine(34) in tRNA + adenine + L-methionine + 2 H(+). It functions in the pathway tRNA modification; tRNA-queuosine biosynthesis. In terms of biological role, transfers and isomerizes the ribose moiety from AdoMet to the 7-aminomethyl group of 7-deazaguanine (preQ1-tRNA) to give epoxyqueuosine (oQ-tRNA). The protein is S-adenosylmethionine:tRNA ribosyltransferase-isomerase of Stenotrophomonas maltophilia (strain R551-3).